Reading from the N-terminus, the 668-residue chain is DNA mismatch repair protein MutL (668 aa).

The segment at Thr437–Lys459 is disordered. The span at Tyr438–Lys459 shows a compositional bias: polar residues.

The protein belongs to the DNA mismatch repair MutL/HexB family.

Its function is as follows. This protein is involved in the repair of mismatches in DNA. It is required for dam-dependent methyl-directed DNA mismatch repair. May act as a 'molecular matchmaker', a protein that promotes the formation of a stable complex between two or more DNA-binding proteins in an ATP-dependent manner without itself being part of a final effector complex. In Leuconostoc citreum (strain KM20), this protein is DNA mismatch repair protein MutL.